Reading from the N-terminus, the 287-residue chain is Large ribosomal subunit protein uL2 (287 aa).

The segment at 221–287 (RGSVMNPCDH…SKRSRGGRDS (67 aa)) is disordered. The segment covering 258–287 (KTRKKNKPSNKLVVRRRRRVSKRSRGGRDS) has biased composition (basic residues).

The protein belongs to the universal ribosomal protein uL2 family. In terms of assembly, part of the 50S ribosomal subunit. Forms a bridge to the 30S subunit in the 70S ribosome.

In terms of biological role, one of the primary rRNA binding proteins. Required for association of the 30S and 50S subunits to form the 70S ribosome, for tRNA binding and peptide bond formation. It has been suggested to have peptidyltransferase activity; this is somewhat controversial. Makes several contacts with the 16S rRNA in the 70S ribosome. The chain is Large ribosomal subunit protein uL2 from Prochlorococcus marinus (strain AS9601).